Reading from the N-terminus, the 375-residue chain is Alcohol dehydrogenase 1 (375 aa).

Position 2 is an N-acetylserine (S2). Zn(2+) is bound by residues C47, H68, C98, C101, C104, C112, and C175. NAD(+) is bound by residues 200–205 (GLGGVG), D224, and K229. An N6-succinyllysine modification is found at K234. An NAD(+)-binding site is contributed by 293–295 (VGV). The residue at position 340 (K340) is an N6-succinyllysine. R370 contributes to the NAD(+) binding site.

Belongs to the zinc-containing alcohol dehydrogenase family. Class-I subfamily. Dimer of identical or non-identical chains of three types (A, B, C), which are coded by 3 separate genes at different loci. Zn(2+) serves as cofactor. As to expression, expressed at high levels in the liver, small intestine and eye, at moderate levels in kidney, ovary and uterus, and at low levels in the spinal cord, thymus, heart, stomach mucosa, skin and testis.

The protein localises to the cytoplasm. The catalysed reaction is a primary alcohol + NAD(+) = an aldehyde + NADH + H(+). The enzyme catalyses a secondary alcohol + NAD(+) = a ketone + NADH + H(+). The polypeptide is Alcohol dehydrogenase 1 (Adh1) (Mus musculus (Mouse)).